A 466-amino-acid polypeptide reads, in one-letter code: MEVKLEEHFNKTFVTENNTAASQNTASPAWEDYRGTENNTSAARNTAFPVWEDYRGSVDDLQYFLIGLYTFVSLLGFMGNLLILMAVMKKRNQKTTVNFLIGNLAFSDILVVLFCSPFTLTSVLLDQWMFGKAMCHIMPFLQCVSVLVSTLILISIAIVRYHMIKHPISNNLTANHGYFLIATVWTLGFAICSPLPVFHSLVELKETFGSALLSSKYLCVESWPSDSYRIAFTISLLLVQYILPLVCLTVSHTSVCRSISCGLSHKENRLEENEMINLTLHPSKKSRDQAKPPSTQKWSYSFIRKHRRRYSKKTACVLPAPAGPSQEKHLTVPENPGSVRSQLSPSSKVIPGVPICFEVKPEESSDAQEMRVKRSLTRIKKRSRSVFYRLTILILVFAVSWMPLHVFHVVTDFNDNLISNRHFKLVYCICHLLGMMSCCLNPILYGFLNNGIKADLRALIHCLHMS.

The Extracellular segment spans residues 1-63 (MEVKLEEHFN…YRGSVDDLQY (63 aa)). Asparagine 10, asparagine 17, asparagine 38, and asparagine 39 each carry an N-linked (GlcNAc...) asparagine glycan. The helical transmembrane segment at 64-84 (FLIGLYTFVSLLGFMGNLLIL) threads the bilayer. Residues 85–98 (MAVMKKRNQKTTVN) lie on the Cytoplasmic side of the membrane. A helical membrane pass occupies residues 99 to 119 (FLIGNLAFSDILVVLFCSPFT). Over 120–138 (LTSVLLDQWMFGKAMCHIM) the chain is Extracellular. Cysteine 135 and cysteine 219 are joined by a disulfide. The helical transmembrane segment at 139–159 (PFLQCVSVLVSTLILISIAIV) threads the bilayer. The Cytoplasmic segment spans residues 160 to 177 (RYHMIKHPISNNLTANHG). A helical transmembrane segment spans residues 178 to 198 (YFLIATVWTLGFAICSPLPVF). The Extracellular segment spans residues 199–229 (HSLVELKETFGSALLSSKYLCVESWPSDSYR). A helical transmembrane segment spans residues 230 to 250 (IAFTISLLLVQYILPLVCLTV). The Cytoplasmic segment spans residues 251–389 (SHTSVCRSIS…KKRSRSVFYR (139 aa)). The disordered stretch occupies residues 323 to 346 (GPSQEKHLTVPENPGSVRSQLSPS). A helical membrane pass occupies residues 390-410 (LTILILVFAVSWMPLHVFHVV). The Extracellular portion of the chain corresponds to 411 to 427 (TDFNDNLISNRHFKLVY). The chain crosses the membrane as a helical span at residues 428-448 (CICHLLGMMSCCLNPILYGFL). Topologically, residues 449 to 466 (NNGIKADLRALIHCLHMS) are cytoplasmic. Cysteine 462 carries the S-palmitoyl cysteine lipid modification.

It belongs to the G-protein coupled receptor 1 family.

Its subcellular location is the cell membrane. Functionally, receptor for neuropeptide Y and peptide YY. The activity of this receptor is mediated by G proteins that inhibit adenylate cyclase activity. Seems to be associated with food intake. Could be involved in feeding disorders. This chain is Neuropeptide Y receptor type 5 (Npy5r), found in Mus musculus (Mouse).